A 116-amino-acid chain; its full sequence is T cell receptor alpha variable 38-1 (116 aa).

Positions 1–21 (MTRVSLLWAVVVSTCLESGMA) are cleaved as a signal peptide. One can recognise an Ig-like domain in the interval 22–116 (QTVTQSQPEM…TAMYFCAFMK (95 aa)). Residues C43 and C112 are joined by a disulfide bond. N78 carries N-linked (GlcNAc...) asparagine glycosylation.

Alpha-beta TR is a heterodimer composed of an alpha and beta chain; disulfide-linked. The alpha-beta TR is associated with the transmembrane signaling CD3 coreceptor proteins to form the TR-CD3 (TcR or TCR). The assembly of alpha-beta TR heterodimers with CD3 occurs in the endoplasmic reticulum where a single alpha-beta TR heterodimer associates with one CD3D-CD3E heterodimer, one CD3G-CD3E heterodimer and one CD247 homodimer forming a stable octameric structure. CD3D-CD3E and CD3G-CD3E heterodimers preferentially associate with TR alpha and TR beta chains, respectively. The association of the CD247 homodimer is the last step of TcR assembly in the endoplasmic reticulum and is required for transport to the cell surface.

It localises to the cell membrane. Its function is as follows. V region of the variable domain of T cell receptor (TR) alpha chain that participates in the antigen recognition. Alpha-beta T cell receptors are antigen specific receptors which are essential to the immune response and are present on the cell surface of T lymphocytes. Recognize peptide-major histocompatibility (MH) (pMH) complexes that are displayed by antigen presenting cells (APC), a prerequisite for efficient T cell adaptive immunity against pathogens. Binding of alpha-beta TR to pMH complex initiates TR-CD3 clustering on the cell surface and intracellular activation of LCK that phosphorylates the ITAM motifs of CD3G, CD3D, CD3E and CD247 enabling the recruitment of ZAP70. In turn ZAP70 phosphorylates LAT, which recruits numerous signaling molecules to form the LAT signalosome. The LAT signalosome propagates signal branching to three major signaling pathways, the calcium, the mitogen-activated protein kinase (MAPK) kinase and the nuclear factor NF-kappa-B (NF-kB) pathways, leading to the mobilization of transcription factors that are critical for gene expression and essential for T cell growth and differentiation. The T cell repertoire is generated in the thymus, by V-(D)-J rearrangement. This repertoire is then shaped by intrathymic selection events to generate a peripheral T cell pool of self-MH restricted, non-autoaggressive T cells. Post-thymic interaction of alpha-beta TR with the pMH complexes shapes TR structural and functional avidity. The sequence is that of T cell receptor alpha variable 38-1 from Homo sapiens (Human).